Reading from the N-terminus, the 359-residue chain is Phosphoserine aminotransferase (359 aa).

Residue arginine 41 participates in L-glutamate binding. 4 residues coordinate pyridoxal 5'-phosphate: tryptophan 101, threonine 151, aspartate 170, and glutamine 193. Lysine 194 carries the post-translational modification N6-(pyridoxal phosphate)lysine. 235 to 236 (NT) is a pyridoxal 5'-phosphate binding site.

The protein belongs to the class-V pyridoxal-phosphate-dependent aminotransferase family. SerC subfamily. In terms of assembly, homodimer. It depends on pyridoxal 5'-phosphate as a cofactor.

It is found in the cytoplasm. The catalysed reaction is O-phospho-L-serine + 2-oxoglutarate = 3-phosphooxypyruvate + L-glutamate. It carries out the reaction 4-(phosphooxy)-L-threonine + 2-oxoglutarate = (R)-3-hydroxy-2-oxo-4-phosphooxybutanoate + L-glutamate. The protein operates within amino-acid biosynthesis; L-serine biosynthesis; L-serine from 3-phospho-D-glycerate: step 2/3. Its pathway is cofactor biosynthesis; pyridoxine 5'-phosphate biosynthesis; pyridoxine 5'-phosphate from D-erythrose 4-phosphate: step 3/5. Functionally, catalyzes the reversible conversion of 3-phosphohydroxypyruvate to phosphoserine and of 3-hydroxy-2-oxo-4-phosphonooxybutanoate to phosphohydroxythreonine. In Laribacter hongkongensis (strain HLHK9), this protein is Phosphoserine aminotransferase.